Consider the following 518-residue polypeptide: UDP-N-acetylmuramate--L-alanine ligase (518 aa).

An ATP-binding site is contributed by 158–164; sequence GTHGKTT.

It belongs to the MurCDEF family.

The protein localises to the cytoplasm. The enzyme catalyses UDP-N-acetyl-alpha-D-muramate + L-alanine + ATP = UDP-N-acetyl-alpha-D-muramoyl-L-alanine + ADP + phosphate + H(+). The protein operates within cell wall biogenesis; peptidoglycan biosynthesis. Functionally, cell wall formation. The polypeptide is UDP-N-acetylmuramate--L-alanine ligase (Crocosphaera subtropica (strain ATCC 51142 / BH68) (Cyanothece sp. (strain ATCC 51142))).